We begin with the raw amino-acid sequence, 392 residues long: Alkaline phosphatase L (392 aa).

Positions 1–23 are cleaved as a signal peptide; that stretch reads MYKRSLIAASLSVAALVSAQAMA.

It belongs to the PstS family. In terms of assembly, homodimer.

Its subcellular location is the secreted. The protein resides in the periplasm. It catalyses the reaction a phosphate monoester + H2O = an alcohol + phosphate. Has both a phosphomonoesterase and phosphodiesterase activity. The chain is Alkaline phosphatase L from Pseudomonas aeruginosa.